An 872-amino-acid polypeptide reads, in one-letter code: Protein translocase subunit SecA (872 aa).

Residues Gln87, 105–109, and Asp500 contribute to the ATP site; that span reads GEGKT. Residues Cys855, Cys857, Cys866, and His867 each contribute to the Zn(2+) site.

It belongs to the SecA family. As to quaternary structure, monomer and homodimer. Part of the essential Sec protein translocation apparatus which comprises SecA, SecYEG and auxiliary proteins SecDF-YajC and YidC. It depends on Zn(2+) as a cofactor.

Its subcellular location is the cell inner membrane. The protein localises to the cytoplasm. It carries out the reaction ATP + H2O + cellular proteinSide 1 = ADP + phosphate + cellular proteinSide 2.. In terms of biological role, part of the Sec protein translocase complex. Interacts with the SecYEG preprotein conducting channel. Has a central role in coupling the hydrolysis of ATP to the transfer of proteins into and across the cell membrane, serving both as a receptor for the preprotein-SecB complex and as an ATP-driven molecular motor driving the stepwise translocation of polypeptide chains across the membrane. This is Protein translocase subunit SecA from Anaplasma marginale (strain St. Maries).